A 298-amino-acid chain; its full sequence is GTPase Era (298 aa).

An Era-type G domain is found at 4-171 (RAGFVALIGR…KEKIVSFLPE (168 aa)). The interval 12-19 (GRTNVGKS) is G1. A GTP-binding site is contributed by 12–19 (GRTNVGKS). The interval 38 to 42 (QTTRN) is G2. The interval 59 to 62 (DTPG) is G3. Residues 59-63 (DTPGI) and 121-124 (NKID) each bind GTP. Residues 121–124 (NKID) are G4. The G5 stretch occupies residues 150–152 (ISA). Residues 202–280 (LEEEVPHGVY…FLQLWVKVRK (79 aa)) form the KH type-2 domain.

This sequence belongs to the TRAFAC class TrmE-Era-EngA-EngB-Septin-like GTPase superfamily. Era GTPase family. As to quaternary structure, monomer.

The protein localises to the cytoplasm. The protein resides in the cell membrane. Its function is as follows. An essential GTPase that binds both GDP and GTP, with rapid nucleotide exchange. Plays a role in 16S rRNA processing and 30S ribosomal subunit biogenesis and possibly also in cell cycle regulation and energy metabolism. This chain is GTPase Era, found in Caldanaerobacter subterraneus subsp. tengcongensis (strain DSM 15242 / JCM 11007 / NBRC 100824 / MB4) (Thermoanaerobacter tengcongensis).